A 711-amino-acid polypeptide reads, in one-letter code: Long-chain-fatty-acid--CoA ligase 4 (711 aa).

Residues 8-28 form a helical; Signal-anchor for type III membrane protein membrane-spanning segment; the sequence is LTIILLPVHLLITIYSALIFI. The Cytoplasmic portion of the chain corresponds to 29-711; it reads PWYFLTNAKK…KDIERMYGGK (683 aa). Phosphoserine is present on S447.

It belongs to the ATP-dependent AMP-binding enzyme family. Requires Mg(2+) as cofactor.

The protein resides in the mitochondrion outer membrane. The protein localises to the peroxisome membrane. It localises to the microsome membrane. Its subcellular location is the endoplasmic reticulum membrane. It is found in the cell membrane. The catalysed reaction is a long-chain fatty acid + ATP + CoA = a long-chain fatty acyl-CoA + AMP + diphosphate. It catalyses the reaction (5Z,8Z,11Z,14Z)-eicosatetraenoate + ATP + CoA = (5Z,8Z,11Z,14Z)-eicosatetraenoyl-CoA + AMP + diphosphate. It carries out the reaction hexadecanoate + ATP + CoA = hexadecanoyl-CoA + AMP + diphosphate. The enzyme catalyses (E)-hexadec-2-enoate + ATP + CoA = (2E)-hexadecenoyl-CoA + AMP + diphosphate. The catalysed reaction is 15-hydroxy-(5Z,8Z,11Z,13E)-eicosatetraenoate + ATP + CoA = 15-hydroxy-(5Z,8Z,11Z,13E)-eicosatetraenoyl-CoA + AMP + diphosphate. It catalyses the reaction 12-hydroxy-(5Z,8Z,10E,14Z)-eicosatetraenoate + ATP + CoA = 12-hydroxy-(5Z,8Z,10E,14Z)-eicosatetraenoyl-CoA + AMP + diphosphate. It carries out the reaction 5-hydroxy-(6E,8Z,11Z,14Z)-eicosatetraenoate + ATP + CoA = 5-hydroxy-(6E,8Z,11Z,14Z)-eicosatetraenoyl-CoA + AMP + diphosphate. The enzyme catalyses 5,6-epoxy-(8Z,11Z,14Z)-eicosatrienoate + ATP + CoA = 5,6-epoxy-(8Z,11Z,14Z)-eicosatrienoyl-CoA + AMP + diphosphate. The catalysed reaction is 14,15-epoxy-(5Z,8Z,11Z)-eicosatrienoate + ATP + CoA = 14,15-epoxy-(5Z,8Z,11Z)-eicosatrienoyl-CoA + AMP + diphosphate. It catalyses the reaction 11,12-epoxy-(5Z,8Z,14Z)-eicosatrienoate + ATP + CoA = 11,12-epoxy-(5Z,8Z,14Z)-eicosatrienoyl-CoA + AMP + diphosphate. It carries out the reaction 8,9-epoxy-(5Z,11Z,14Z)-eicosatrienoate + ATP + CoA = 8,9-epoxy-(5Z,11Z,14Z)-eicosatrienoyl-CoA + AMP + diphosphate. With respect to regulation, both triacsin C and rosiglitazone inhibit arachidonoyl-CoA ligase activity. Catalyzes the conversion of long-chain fatty acids to their active form acyl-CoA for both synthesis of cellular lipids, and degradation via beta-oxidation. Preferentially activates arachidonate and eicosapentaenoate as substrates. Preferentially activates 8,9-EET &gt; 14,15-EET &gt; 5,6-EET &gt; 11,12-EET. Modulates glucose-stimulated insulin secretion by regulating the levels of unesterified EETs. Modulates prostaglandin E2 secretion. The protein is Long-chain-fatty-acid--CoA ligase 4 (ACSL4) of Homo sapiens (Human).